A 156-amino-acid chain; its full sequence is ATP synthase subunit b (156 aa).

The chain crosses the membrane as a helical span at residues 11–31; sequence LIAFALFVWFCMKFVWPPIIN.

This sequence belongs to the ATPase B chain family. F-type ATPases have 2 components, F(1) - the catalytic core - and F(0) - the membrane proton channel. F(1) has five subunits: alpha(3), beta(3), gamma(1), delta(1), epsilon(1). F(0) has three main subunits: a(1), b(2) and c(10-14). The alpha and beta chains form an alternating ring which encloses part of the gamma chain. F(1) is attached to F(0) by a central stalk formed by the gamma and epsilon chains, while a peripheral stalk is formed by the delta and b chains.

It is found in the cell inner membrane. F(1)F(0) ATP synthase produces ATP from ADP in the presence of a proton or sodium gradient. F-type ATPases consist of two structural domains, F(1) containing the extramembraneous catalytic core and F(0) containing the membrane proton channel, linked together by a central stalk and a peripheral stalk. During catalysis, ATP synthesis in the catalytic domain of F(1) is coupled via a rotary mechanism of the central stalk subunits to proton translocation. In terms of biological role, component of the F(0) channel, it forms part of the peripheral stalk, linking F(1) to F(0). In Haemophilus influenzae (strain PittGG), this protein is ATP synthase subunit b.